A 519-amino-acid polypeptide reads, in one-letter code: Lysine histidine transporter-like 8 (519 aa).

The interval 1–44 is disordered; it reads MDERPETELISIPATPRVSTPEILTPSGQRSPRPATKPSSATWT. Residues 1 to 114 lie on the Cytoplasmic side of the membrane; sequence MDERPETELI…NLNAGVGFQA (114 aa). The next 2 helical transmembrane spans lie at 115–135 and 136–156; these read LVLP…SLTI and AYCW…AVPG. The Cytoplasmic portion of the chain corresponds to 157–176; it reads KRYNRYVELAQAAFGERLGV. The chain crosses the membrane as a helical span at residues 177 to 197; that stretch reads WLALFPTVYLSAGTATALILI. Residues 198–217 are Extracellular-facing; it reads GGETMKLFFQIVCGPLCTSN. The chain crosses the membrane as a helical span at residues 218–238; sequence PLTTVEWYLVFTSLCIVLSQL. Over 239 to 243 the chain is Cytoplasmic; that stretch reads PNLNS. A helical membrane pass occupies residues 244–264; that stretch reads IAGLSLIGAVTAITYSTMVWV. Over 265-282 the chain is Extracellular; the sequence is LSVSQPRPATISYEPLSM. The helical transmembrane segment at 283–303 threads the bilayer; it reads PSTSGSLFAVLNALGIIAFAF. At 304 to 333 the chain is on the cytoplasmic side; sequence RGHNLVLEIQSTMPSTFKHPAHVPMWRGAK. A helical membrane pass occupies residues 334-354; that stretch reads ISYFLIALCIFPISIGGFWAY. Topologically, residues 355–377 are extracellular; sequence GNLMPSGGMLAALYAFHIHDIPR. A helical membrane pass occupies residues 378-398; that stretch reads GLLATAFLLVVFSCLSSFQIY. The Cytoplasmic segment spans residues 399 to 427; it reads SMPAFDSFEAGYTSRTNKPCSIWVRSGFR. The helical transmembrane segment at 428 to 448 threads the bilayer; that stretch reads VFFGFVSFFIGVALPFLSSLA. A topological domain (extracellular) is located at residue Gly449. The chain crosses the membrane as a helical span at residues 450-470; the sequence is LLGGLTLPVTFAYPCFMWVLI. The Cytoplasmic segment spans residues 471 to 485; sequence KKPAKYSFNWYFHWG. The helical transmembrane segment at 486–506 threads the bilayer; sequence LGWLGVAFSLAFSIGGIWSMV. Topologically, residues 507–519 are extracellular; sequence TNGLKLKFFKPPN.

It belongs to the amino acid/polyamine transporter 2 family. Amino acid/auxin permease (AAAP) (TC 2.A.18.2) subfamily.

The protein resides in the cell membrane. Amino acid transporter. This chain is Lysine histidine transporter-like 8 (AATL1), found in Arabidopsis thaliana (Mouse-ear cress).